Consider the following 1164-residue polypeptide: MKKNTDSEMDQRLGYKFLVPDPKAGVFYRPLHFQYVSYSNFILHRLHEILTVKRPLLSFKNNTERIMIEISNVKVTPPDYSPIIASIKGKSYDALATFTVNIFKEVMTKEGISITKISSYEGKDSHLIKIPLLIGYGNKNPLDTAKYLVPNVIGGVFINKQSVEKVGINLVEKITTWPKFRVVKPNSFTFSFSSVSPPNVLPTRYRHYKISLDISQLEASNISSTKTFITVNIVLLSQYLSRVSLEFIRRSLSYDMPPEVVYLVNAIIDSAKRITESITDFNIDTYINDLVEAEHIKQKSQLTINEFKYEMLHNFLPHMNYTPDQLKGFYMISLLRKFLYCIYHTSRYPDRDSMVCHRILTYGKYFETLAHDELENYIGNIRNDIMNNHKNRGTYAVNIHVLTTPGLNHAFSSLLSGKFKKSDGSYRTHPHYSWMQNISIPRSVGFYPDQVKISKMFSVRKYHPSQYLYFCSSDVPERGPQVGLVSQLSVLSSITNILTSEYLDLEKKICEYIRSYYKDDISYFETGFPITIENALVASLNPNMICDFVTDFRRRKRMGFFGNLEVGITLVRDHMNEIRINIGAGRLVRPFLVVDNGELMMDVCQELESRLDDMTFSDIQKEFPHVIEMVDIEQFTFSNVCESVQKFRMMSKDERKQYDLCDFPAEFRDGYVASSLVGINHNSGPRAILGCAQAKQAISCLSSDIRNKIDNGIHLMYPERPIVISKALETSKIAANCFGQHVTIALMSYKGINQEDGIIIKKQFIQRGGLDIVTAKKHQVEIPLENFNNKERDRSNAYSKLESNGLVRLNAFLESGDAMARNISSRTLEDDFARDNQISFDVSEKYTDMYKSRVERVQVELTDKVKVRVLTMKERRPILGDKFTTRTSQKGTVAYIADETELPYDENGITPDVIINSTSIFSRKTISMLIEVILTAAYSAKPYNNNGENRPVCFPSSNETSIDTYMQFAKQCYEHSNPQLTDDELSDKVFCEKILYDPETDKPYASKVFFGPIYYLRLRHLTQDKATVRCRGKKTKLIRQANEGRKRGGGIKFGEMERDCLIAHGAANTITEVLKDSEEDYQDVYICENCGDIAAQIKGINTCLRCSKLNLSPLLTKIDTTHVSKVFLTQMNARGVKVKLDFERRPPSFYKQLDKVDLKPSFLK.

This sequence belongs to the RNA polymerase beta chain family. The DNA-dependent RNA polymerase used for intermediate and late genes expression consists of eight subunits (147) kDa, (133) kDa, (35) kDa, (30) kDa, (22) kDa, (19) kDa, (18) kDa and (7) kDa totalling more than 500 kDa in mass. The same holoenzyme, with the addition of the transcription-specificity factor RAP94, is used for early gene expression.

It is found in the virion. The catalysed reaction is RNA(n) + a ribonucleoside 5'-triphosphate = RNA(n+1) + diphosphate. Part of the DNA-dependent RNA polymerase which catalyzes the transcription of viral DNA into RNA using the four ribonucleoside triphosphates as substrates. Responsible for the transcription of early, intermediate and late genes. DNA-dependent RNA polymerase associates with the early transcription factor (ETF), itself composed of D6 and A7, thereby allowing the early genes transcription. Late transcription, and probably also intermediate transcription, require newly synthesized RNA polymerase. This chain is DNA-directed RNA polymerase 132 kDa polypeptide (RPO132), found in Mus musculus (Mouse).